The sequence spans 415 residues: Serine hydroxymethyltransferase (415 aa).

(6S)-5,6,7,8-tetrahydrofolate is bound by residues Leu120 and 124-126 (GHL). N6-(pyridoxal phosphate)lysine is present on Lys229.

Belongs to the SHMT family. Homodimer. Pyridoxal 5'-phosphate serves as cofactor.

It is found in the cytoplasm. The enzyme catalyses (6R)-5,10-methylene-5,6,7,8-tetrahydrofolate + glycine + H2O = (6S)-5,6,7,8-tetrahydrofolate + L-serine. It participates in one-carbon metabolism; tetrahydrofolate interconversion. It functions in the pathway amino-acid biosynthesis; glycine biosynthesis; glycine from L-serine: step 1/1. Catalyzes the reversible interconversion of serine and glycine with tetrahydrofolate (THF) serving as the one-carbon carrier. This reaction serves as the major source of one-carbon groups required for the biosynthesis of purines, thymidylate, methionine, and other important biomolecules. Also exhibits THF-independent aldolase activity toward beta-hydroxyamino acids, producing glycine and aldehydes, via a retro-aldol mechanism. The chain is Serine hydroxymethyltransferase from Pelotomaculum thermopropionicum (strain DSM 13744 / JCM 10971 / SI).